Consider the following 957-residue polypeptide: SLIT and NTRK-like protein 5 (957 aa).

Positions 1–40 are cleaved as a signal peptide; the sequence is MHVCCPPVTLEQDLHRKMHSWMLQTLAFAVTSLVLSCAET. Topologically, residues 41 to 664 are extracellular; that stretch reads IDYYGEICDN…GTGASSVPLS (624 aa). LRR repeat units follow at residues 82–103, 106–127, 130–151, 154–175, 178–199, and 201–222; these read PIYH…EFVN, GASI…AFHG, GLRR…TFLG, NLEY…AFGK, MLQV…LFRF, and PLTH…GLLQ. Residue N103 is glycosylated (N-linked (GlcNAc...) asparagine). Residues 235 to 286 form the LRRCT 1 domain; it reads NPWNCSCELISLKDWLDSISYSALVGDVVCETPFRLHGRDLDEVSKQELCPR. The interval 317-358 is disordered; sequence ATSSSAVYKPPLKPPKGTRQPNKPRVRPTSRQPSKDLGYSNY. The LRRNT domain maps to 365 to 407; it reads QTKSPVPLECPTACTCNLQISDLGLNVNCQERKIESIAELQPK. LRR repeat units follow at residues 410–431, 434–455, 458–479, 482–503, 506–527, and 529–550; these read NPKK…DFLE, GLDL…AFGD, NLRR…LFYG, SLQY…TFDP, NLQL…VFSG, and TLLR…GVLD. Residues 563-614 enclose the LRRCT 2 domain; the sequence is NPWDCTCDVVGMKLWIEQLKVGVLVDEVICKAPKKFAETYMRSIKSELLCPD. Low complexity predominate over residues 623–632; that stretch reads PTPSSIQVPS. The tract at residues 623-642 is disordered; it reads PTPSSIQVPSRTNAATPAVR. A glycan (N-linked (GlcNAc...) asparagine) is linked at N644. A helical membrane pass occupies residues 665-685; it reads VLILSLLLVFIMSVFVAAGLF. Over 686 to 957 the chain is Cytoplasmic; that stretch reads VLVMKRRKKN…LEKQTTFSQF (272 aa). Positions 789-844 are disordered; it reads SNHHLQQQPPPPPQQPQQQPPPQMQMQPGEEERRESHHLRSPAYSVSTIEPREDLL. The segment covering 796-811 has biased composition (pro residues); the sequence is QPPPPPQQPQQQPPPQ.

This sequence belongs to the SLITRK family. As to expression, in the adult, significant expression is detected only in the brain. In the embryo, expressed in the subventricular zone, cortical plate, pyramidal layer of hippocampus, thalamus and hypothalamus.

Its subcellular location is the membrane. Functionally, suppresses neurite outgrowth. The polypeptide is SLIT and NTRK-like protein 5 (Slitrk5) (Mus musculus (Mouse)).